A 243-amino-acid polypeptide reads, in one-letter code: MSKTHFGFETVEETDKAKKVAGVFHSVANNYDLMNDLMSAGMHRAWKAFTIAQANVRPGYKVLDIAAGTGDLTKAFAKAAGPTGEVWHTDINESMLRVGRDRLLDKGIVTPSLLCDAEKIPFPDNYFDVVTVAFGLRNMTHKDVALAEMRRVAKPGGRVMVLEFSKVWEPLKKAYDLYSFKVLPWLGDKFAKDADSYRYLAESIRMHPDQDTLKTMMEQAGLDAVKYYNLSGGVVALHLGTKY.

S-adenosyl-L-methionine is bound by residues Thr69, Asp90, and 116-117 (DA).

The protein belongs to the class I-like SAM-binding methyltransferase superfamily. MenG/UbiE family.

The catalysed reaction is a 2-demethylmenaquinol + S-adenosyl-L-methionine = a menaquinol + S-adenosyl-L-homocysteine + H(+). It catalyses the reaction a 2-methoxy-6-(all-trans-polyprenyl)benzene-1,4-diol + S-adenosyl-L-methionine = a 5-methoxy-2-methyl-3-(all-trans-polyprenyl)benzene-1,4-diol + S-adenosyl-L-homocysteine + H(+). It functions in the pathway quinol/quinone metabolism; menaquinone biosynthesis; menaquinol from 1,4-dihydroxy-2-naphthoate: step 2/2. It participates in cofactor biosynthesis; ubiquinone biosynthesis. In terms of biological role, methyltransferase required for the conversion of demethylmenaquinol (DMKH2) to menaquinol (MKH2) and the conversion of 2-polyprenyl-6-methoxy-1,4-benzoquinol (DDMQH2) to 2-polyprenyl-3-methyl-6-methoxy-1,4-benzoquinol (DMQH2). This chain is Ubiquinone/menaquinone biosynthesis C-methyltransferase UbiE, found in Burkholderia multivorans (strain ATCC 17616 / 249).